The following is a 339-amino-acid chain: DNA-directed RNA polymerase subunit alpha (339 aa).

Positions 1 to 233 are alpha N-terminal domain (alpha-NTD); that stretch reads MVREKVRIST…DLFIPFLHAE (233 aa). Residues 267-339 form an alpha C-terminal domain (alpha-CTD) region; it reads IALKSIFIDQ…FTINLPKNKF (73 aa).

It belongs to the RNA polymerase alpha chain family. As to quaternary structure, in plastids the minimal PEP RNA polymerase catalytic core is composed of four subunits: alpha, beta, beta', and beta''. When a (nuclear-encoded) sigma factor is associated with the core the holoenzyme is formed, which can initiate transcription.

The protein resides in the plastid. It is found in the chloroplast. The enzyme catalyses RNA(n) + a ribonucleoside 5'-triphosphate = RNA(n+1) + diphosphate. Its function is as follows. DNA-dependent RNA polymerase catalyzes the transcription of DNA into RNA using the four ribonucleoside triphosphates as substrates. The sequence is that of DNA-directed RNA polymerase subunit alpha from Populus trichocarpa (Western balsam poplar).